The primary structure comprises 632 residues: PTS system mannitol-specific EIICBA component (632 aa).

One can recognise a PTS EIIC type-2 domain in the interval 12-341; it reads FGRFLSNMIM…ILLKYDFNTI (330 aa). Helical transmembrane passes span 24-45, 50-70, 134-155, 165-185, 273-292, and 313-334; these read ISIFIAWGMMNALFMPLGWQPN, QLISPMIFYLLPILIGYTGGS, SLAILGILLAIISFFTIGPFIE, IQIILSYNLLPLTSIIIEPAK, LILGGMSGIFILVLLHGGLI, and FSNIISVACSFLVSFISSSILL. A PTS EIIB type-2 domain is found at 374–469; the sequence is KTIIVACDAG…KLVENMVFLY (96 aa). Cys380 serves as the catalytic Phosphocysteine intermediate; for EIIB activity. Cys380 is modified (phosphocysteine; by EIIA). Positions 488-630 constitute a PTS EIIA type-2 domain; sequence FQLNEENIIL…KEALSLLTME (143 aa). His548 functions as the Tele-phosphohistidine intermediate; for EIIA activity in the catalytic mechanism. Phosphohistidine; by HPr is present on His548.

As to quaternary structure, homodimer. Post-translationally, an intramolecular phosphotransfer takes places between His-548 and Cys-380.

It localises to the cell inner membrane. The enzyme catalyses D-mannitol(out) + N(pros)-phospho-L-histidyl-[protein] = D-mannitol 1-phosphate(in) + L-histidyl-[protein]. In terms of biological role, the phosphoenolpyruvate-dependent sugar phosphotransferase system (sugar PTS), a major carbohydrate active transport system, catalyzes the phosphorylation of incoming sugar substrates concomitantly with their translocation across the cell membrane. This system is involved in D-mannitol transport. In Buchnera aphidicola subsp. Acyrthosiphon pisum (strain APS) (Acyrthosiphon pisum symbiotic bacterium), this protein is PTS system mannitol-specific EIICBA component (mtlA).